A 422-amino-acid chain; its full sequence is Dihydrofolate synthase/folylpolyglutamate synthase (422 aa).

29 to 31 (DLG) is a binding site for 7,8-dihydropteroate. 59-62 (GKGT) lines the ATP pocket. Position 83 (S83) interacts with Mg(2+). 122–125 (TYFE) serves as a coordination point for 7,8-dihydropteroate. E146 is a Mg(2+) binding site. 153 to 155 (LDA) contributes to the 7,8-dihydropteroate binding site. Position 173 (H173) interacts with Mg(2+). K188 bears the N6-carboxylysine mark. Residues N257, R289, and D302 each contribute to the ATP site.

It belongs to the folylpolyglutamate synthase family. Monomer. Mg(2+) is required as a cofactor.

The enzyme catalyses 7,8-dihydropteroate + L-glutamate + ATP = 7,8-dihydrofolate + ADP + phosphate + H(+). It carries out the reaction (6S)-5,6,7,8-tetrahydrofolyl-(gamma-L-Glu)(n) + L-glutamate + ATP = (6S)-5,6,7,8-tetrahydrofolyl-(gamma-L-Glu)(n+1) + ADP + phosphate + H(+). It catalyses the reaction 10-formyltetrahydrofolyl-(gamma-L-Glu)(n) + L-glutamate + ATP = 10-formyltetrahydrofolyl-(gamma-L-Glu)(n+1) + ADP + phosphate + H(+). The catalysed reaction is (6R)-5,10-methylenetetrahydrofolyl-(gamma-L-Glu)(n) + L-glutamate + ATP = (6R)-5,10-methylenetetrahydrofolyl-(gamma-L-Glu)(n+1) + ADP + phosphate + H(+). The protein operates within cofactor biosynthesis; tetrahydrofolate biosynthesis; 7,8-dihydrofolate from 2-amino-4-hydroxy-6-hydroxymethyl-7,8-dihydropteridine diphosphate and 4-aminobenzoate: step 2/2. It functions in the pathway cofactor biosynthesis; tetrahydrofolylpolyglutamate biosynthesis. Functions in two distinct reactions of the de novo folate biosynthetic pathway. Catalyzes the addition of a glutamate residue to dihydropteroate (7,8-dihydropteroate or H2Pte) to form dihydrofolate (7,8-dihydrofolate monoglutamate or H2Pte-Glu). Also catalyzes successive additions of L-glutamate to tetrahydrofolate or 10-formyltetrahydrofolate or 5,10-methylenetetrahydrofolate, leading to folylpolyglutamate derivatives. The polypeptide is Dihydrofolate synthase/folylpolyglutamate synthase (Escherichia coli (strain K12)).